Consider the following 345-residue polypeptide: Phosphoribosylformylglycinamidine cyclo-ligase (345 aa).

The protein belongs to the AIR synthase family.

It localises to the cytoplasm. It carries out the reaction 2-formamido-N(1)-(5-O-phospho-beta-D-ribosyl)acetamidine + ATP = 5-amino-1-(5-phospho-beta-D-ribosyl)imidazole + ADP + phosphate + H(+). It functions in the pathway purine metabolism; IMP biosynthesis via de novo pathway; 5-amino-1-(5-phospho-D-ribosyl)imidazole from N(2)-formyl-N(1)-(5-phospho-D-ribosyl)glycinamide: step 2/2. This chain is Phosphoribosylformylglycinamidine cyclo-ligase, found in Tolumonas auensis (strain DSM 9187 / NBRC 110442 / TA 4).